Reading from the N-terminus, the 76-residue chain is Serine palmitoyltransferase small subunit B (76 aa).

Residues 1-11 (MDFKRVKDYLS) lie on the Cytoplasmic side of the membrane. Residues 12–29 (WLYYQYQIISCCAVLEPW) traverse the membrane as a helical segment. Residues 30–36 (EQSMFNT) are Lumenal-facing. The chain crosses the membrane as a helical span at residues 37–57 (IILTIFAMVVYTAYVFIPIHI). The Cytoplasmic portion of the chain corresponds to 58 to 76 (RLAWEFFSKMCGYHSTISN).

This sequence belongs to the SPTSS family. SPTSSB subfamily. In terms of assembly, component of the serine palmitoyltransferase (SPT) complex, which is composed of SPTLC1, SPTLC2 or SPTLC3 and SPTSSA or SPTSSB. The heterodimer consisting of SPTLC1 and SPTLC2/SPTLC3 forms the catalytic core of the enzyme, while SPTSSA or SPTSSB subunits determine substrate specificity. SPT also interacts with ORMDL proteins, especially ORMDL3, which negatively regulate SPT activity in the presence of ceramides.

The protein resides in the endoplasmic reticulum membrane. The protein operates within lipid metabolism; sphingolipid metabolism. In terms of biological role, component of the serine palmitoyltransferase multisubunit enzyme (SPT) that catalyzes the initial and rate-limiting step in sphingolipid biosynthesis by condensing L-serine and activated acyl-CoA (most commonly palmitoyl-CoA) to form long-chain bases. The SPT complex is composed of SPTLC1, SPTLC2 or SPTLC3 and SPTSSA or SPTSSB. Within this complex, the heterodimer consisting of SPTLC1 and SPTLC2/SPTLC3 forms the catalytic core. Within the SPT complex, SPTSSB stimulates the catalytic activity and plays a role in substrate specificity. SPT complexes with this subunit showing a preference for longer acyl-CoAs. The SPTLC1-SPTLC2-SPTSSB complex shows a strong preference for C18-CoA substrate, while the SPTLC1-SPTLC3-SPTSSB isozyme displays an ability to use a broader range of acyl-CoAs, without apparent preference. The chain is Serine palmitoyltransferase small subunit B (SPTSSB) from Bos taurus (Bovine).